We begin with the raw amino-acid sequence, 76 residues long: MIFKVFYQKDNTRSPRRETTEALYLDLDVATKEEGVILARELLAKNTAYHVEFIDSLSDESVEYEKETGVFEITSF.

Belongs to the RNA polymerase subunit epsilon family. RNAP is composed of a core of 2 alpha, a beta and a beta' subunit. The core is associated with a delta subunit, and at least one of epsilon or omega. When a sigma factor is associated with the core the holoenzyme is formed, which can initiate transcription.

The catalysed reaction is RNA(n) + a ribonucleoside 5'-triphosphate = RNA(n+1) + diphosphate. In terms of biological role, a non-essential component of RNA polymerase (RNAP). The polypeptide is DNA-directed RNA polymerase subunit epsilon (Lactococcus lactis subsp. lactis (strain IL1403) (Streptococcus lactis)).